Here is a 260-residue protein sequence, read N- to C-terminus: Arginine esterase (260 aa).

The N-terminal stretch at Met1 to Ala17 is a signal peptide. Residues Glu18–Arg24 constitute a propeptide, activation peptide. The region spanning Ile25–Lys257 is the Peptidase S1 domain. 5 cysteine pairs are disulfide-bonded: Cys31–Cys172, Cys50–Cys66, Cys151–Cys218, Cys183–Cys197, and Cys208–Cys233. His65 functions as the Charge relay system in the catalytic mechanism. A glycan (N-linked (GlcNAc...) asparagine) is linked at Asn79. Asp119 acts as the Charge relay system in catalysis. Ser212 serves as the catalytic Charge relay system.

It belongs to the peptidase S1 family. Kallikrein subfamily.

The catalysed reaction is Preferential cleavage of Arg-|-Xaa bonds in small molecule substrates. Highly selective action to release kallidin (lysyl-bradykinin) from kininogen involves hydrolysis of Met-|-Xaa or Leu-|-Xaa.. In terms of biological role, this serine protease is found in dog seminal plasma, its exact physiological function is not known. This Canis lupus familiaris (Dog) protein is Arginine esterase.